Reading from the N-terminus, the 346-residue chain is MKLRSFIGSRVIKTGIAVLLTAYICEWIGWSPVFAVITAIVTIEPTVSDSIRKGLIRFPASAIGAAYAVLFIALFGNSPVTYALSAVFTITTCFRLKLHDGLLVATITSVAMVDVIHSNYVMEFFIRLFTTTIGLSVSTLVNMFLLPPDYQKNIQTKVSSIAQELGKQIQGIYYCLLHVDEINNESKYLDKLLELDKLIIRAEILSRYQTNDSKYHFTENNQEKFKDIKTQLHFLRIMHYHLTNVIDHPKEQINIDEKEKNELLNVSSYIAQVLKKELAYNSDDIQDKRTRLNELFWKEKHRTHNLSSDMLNKLPFELVMLYELISILELTEDYFYTANLHKENAN.

Helical transmembrane passes span 16 to 36 (IAVL…VFAV), 55 to 75 (LIRF…IALF), 102 to 122 (LLVA…NYVM), and 128 to 148 (LFTT…LLPP).

The protein belongs to the UPF0421 family.

The protein localises to the cell membrane. This is UPF0421 protein OB2406 from Oceanobacillus iheyensis (strain DSM 14371 / CIP 107618 / JCM 11309 / KCTC 3954 / HTE831).